The following is a 464-amino-acid chain: Soluble pyridine nucleotide transhydrogenase (464 aa).

An FAD-binding site is contributed by 35-44 (DSRREVGGNC).

This sequence belongs to the class-I pyridine nucleotide-disulfide oxidoreductase family. Requires FAD as cofactor.

The protein resides in the cytoplasm. The enzyme catalyses NAD(+) + NADPH = NADH + NADP(+). In terms of biological role, conversion of NADPH, generated by peripheral catabolic pathways, to NADH, which can enter the respiratory chain for energy generation. In Pseudomonas syringae pv. tomato (strain ATCC BAA-871 / DC3000), this protein is Soluble pyridine nucleotide transhydrogenase.